The chain runs to 203 residues: Small ribosomal subunit protein uS4 (203 aa).

The 73-residue stretch at 92–164 (TRLDSVVYLL…LEENRIRNVP (73 aa)) folds into the S4 RNA-binding domain.

The protein belongs to the universal ribosomal protein uS4 family. As to quaternary structure, part of the 30S ribosomal subunit. Contacts protein S5. The interaction surface between S4 and S5 is involved in control of translational fidelity.

Functionally, one of the primary rRNA binding proteins, it binds directly to 16S rRNA where it nucleates assembly of the body of the 30S subunit. With S5 and S12 plays an important role in translational accuracy. The polypeptide is Small ribosomal subunit protein uS4 (Opitutus terrae (strain DSM 11246 / JCM 15787 / PB90-1)).